The following is a 372-amino-acid chain: Protein-glutamate methylesterase/protein-glutamine glutaminase 1 (372 aa).

The region spanning 4 to 121 (KVLVVDDSSF…ATNKDDAILL (118 aa)) is the Response regulatory domain. At Asp55 the chain carries 4-aspartylphosphate. A disordered region spans residues 138–174 (VVRPTTPTPPPRSSASSVLGGVSTHTQPAPVRSSHAA). The CheB-type methylesterase domain maps to 179 to 372 (SGKQYKLLLI…ESILKESARG (194 aa)). Catalysis depends on residues Ser191, His218, and Asp314.

The protein belongs to the CheB family. In terms of processing, phosphorylated by CheA. Phosphorylation of the N-terminal regulatory domain activates the methylesterase activity.

The protein resides in the cytoplasm. The enzyme catalyses [protein]-L-glutamate 5-O-methyl ester + H2O = L-glutamyl-[protein] + methanol + H(+). It catalyses the reaction L-glutaminyl-[protein] + H2O = L-glutamyl-[protein] + NH4(+). Involved in chemotaxis. Part of a chemotaxis signal transduction system that modulates chemotaxis in response to various stimuli. Catalyzes the demethylation of specific methylglutamate residues introduced into the chemoreceptors (methyl-accepting chemotaxis proteins or MCP) by CheR. Also mediates the irreversible deamidation of specific glutamine residues to glutamic acid. In Shewanella sp. (strain MR-4), this protein is Protein-glutamate methylesterase/protein-glutamine glutaminase 1.